The chain runs to 1235 residues: DNA polymerase catalytic subunit (1235 aa).

Disordered regions lie at residues 640 to 691 and 1098 to 1134; these read QGRF…ETAG and AAAP…ASKP. The span at 650–661 shows a compositional bias: basic and acidic residues; the sequence is APKRPAAAREDE. The segment covering 662–675 has biased composition (acidic residues); that stretch reads ERPEEEGEDEDERE. Basic and acidic residues predominate over residues 676 to 691; that stretch reads EGGGEREPDGARETAG.

The protein belongs to the DNA polymerase type-B family. In terms of assembly, forms a complex with the ssDNA-binding protein UL29, the DNA polymerase processivity factor, and the alkaline exonuclease. Interacts with the putative helicase-primase complex subunit UL8; this interaction may coordinate leading and lagging strand DNA synthesis at the replication fork.

The protein resides in the host nucleus. The enzyme catalyses DNA(n) + a 2'-deoxyribonucleoside 5'-triphosphate = DNA(n+1) + diphosphate. It carries out the reaction Endonucleolytic cleavage to 5'-phosphomonoester.. Replicates viral genomic DNA. The replication complex is composed of six viral proteins: the DNA polymerase, processivity factor, primase, primase-associated factor, helicase, and ssDNA-binding protein. Additionally, the polymerase contains an intrinsic ribonuclease H (RNase H) activity that specifically degrades RNA/DNA heteroduplexes or duplex DNA substrates in the 5' to 3' direction. Therefore, it can catalyze the excision of the RNA primers that initiate the synthesis of Okazaki fragments at a replication fork during viral DNA replication. The polypeptide is DNA polymerase catalytic subunit (Homo sapiens (Human)).